The chain runs to 230 residues: Homeobox protein Hox-B5 (230 aa).

The segment at 1-135 (GGGGGNVSGS…GAAGTDGQSP (135 aa)) is disordered. The span at 49-65 (FPGQESSRFRANQNCPL) shows a compositional bias: polar residues. Residues 87–103 (ATSSAHFTETEETSASS) show a composition bias toward low complexity. Positions 137 to 142 (IFPWMR) match the Antp-type hexapeptide motif. Positions 155 to 214 (GKRARTAYTRYQTLELEKEFHFNRYLTRRRRIEIAHTLCLSERQIKIWFQNRRMKWKKDN) form a DNA-binding region, homeobox.

Belongs to the Antp homeobox family.

It localises to the nucleus. Sequence-specific transcription factor which is part of a developmental regulatory system that provides cells with specific positional identities on the anterior-posterior axis. The protein is Homeobox protein Hox-B5 (hoxb5) of Xenopus laevis (African clawed frog).